We begin with the raw amino-acid sequence, 342 residues long: MEKQILEPQLSALRLPAFNVPWPGARSPHAEVIEARMIEWADHYDLLVNDEHRSRVIRARYGWLAARCYPNAAKELLQVIADYFVWFFLADDLFVDRVETVSGDTLRNLTAMIDVLDFNSAGLEPVWGELAWLDVCRRLRSLLQAEPFERFAQGMRLWATTAGLQILNHIRPKSVGIREYQTIRRHTSGMNPCTALSDAANNGSVKPYEFYQPDVQALVRRANNIVCWANDIQSLGVEIRQPGQFRNMVVIYAEQGGSLQNSVETTAARVDAEISSFLELADAVTARANVTLRGLVDGLKYWIRGYLDWVEHDTLRYVDKFAAVDADDRFLSTPQVASRHSV.

2 residues coordinate Mg(2+): aspartate 91 and aspartate 96. A DDXXXD motif motif is present at residues 91–96; that stretch reads DDLFVD. Arginine 184 serves as a coordination point for substrate. Residues asparagine 230, serine 234, and glutamate 238 each contribute to the Mg(2+) site.

This sequence belongs to the terpene synthase family. Mg(2+) is required as a cofactor.

It carries out the reaction (2E,6E)-farnesyl diphosphate + H2O = (+)-corvol ether B + diphosphate. The enzyme catalyses (2E,6E)-farnesyl diphosphate + H2O = (+)-corvol ether A + diphosphate. Functionally, terpene synthase that catalyzes the conversion of (2E,6E)-farnesyl diphosphate (FPP) into sesquiterpenes which are important for fungi-environment interactions. Produces a mixture consisting of 8 sesquiterpenes including corvol ethers A and B, as well as traces of epizonarene, gamma-cadinene, delta-cadinene, alpha-cadinene, alpha-cadinol, and an unidentified sesquiterpene. The major product is corvol ether A. The protein is Sesquiterpene synthase MBR_09977 of Metarhizium brunneum (strain ARSEF 3297).